A 514-amino-acid chain; its full sequence is uncharacterized protein (514 aa).

3 disordered regions span residues 1 to 68 (MSSP…SESE), 109 to 244 (VPPP…RQAS), and 272 to 484 (RPAV…AQGC). Residues 368–384 (KPQKPKHSSPGKKPAGR) show a composition bias toward basic residues. Residues 385–405 (KTRESQAAAREDNDPNRDEVP) show a composition bias toward basic and acidic residues.

This is an uncharacterized protein from Homo sapiens (Human).